The primary structure comprises 283 residues: MRIVLTGGSGYIGSSLTPVLIKKYGRVYNIGRNTISEVSINGSKEYCEFTYESLFDSLVELSPDLVINLAAGYYNDSGAPDLNVIDGNLKIPFIILEYFKSCNYGRFINIGSYWEFSCSGRGVKGVNPYGIIKSTVRRLLDYYSKYNVIYTNLILYGSYGDNDHRGKIVDCIIDAVNSNETLKLSPGEQKLNLVYIDDIIEAILYIVSSDNGQYDNETLSIYTPTEHTVKEIVCFINEIKDNNLSLGGGRYRNDEVMAPDYKYRNIFHAKDKLKEYITSKIKK.

Residues 7-13 (GGSGYIG), 48-49 (EF), Y129, and K133 contribute to the NAD(+) site. Y129 (proton acceptor) is an active-site residue.

The protein belongs to the NAD(P)-dependent epimerase/dehydratase family.

The catalysed reaction is CDP-alpha-D-abequose + NADP(+) = CDP-4-dehydro-3,6-dideoxy-alpha-D-glucose + NADPH + H(+). The protein operates within bacterial outer membrane biogenesis; LPS O-antigen biosynthesis. Functionally, the CDP-abequose synthase is involved in lipopolysaccharides (LPS) synthesis containing abequose which are important antigens of the cell surface responsible for the serological O specificity. Derivatives of the 3,6-dideoxyhexose group have a particular highly immunogenic character. The polypeptide is CDP-abequose synthase (rfbJ) (Yersinia pseudotuberculosis).